The sequence spans 421 residues: Serine hydroxymethyltransferase (421 aa).

(6S)-5,6,7,8-tetrahydrofolate is bound by residues Leu-123 and 127 to 129; that span reads GHL. N6-(pyridoxal phosphate)lysine is present on Lys-232.

The protein belongs to the SHMT family. Homodimer. Pyridoxal 5'-phosphate serves as cofactor.

Its subcellular location is the cytoplasm. The catalysed reaction is (6R)-5,10-methylene-5,6,7,8-tetrahydrofolate + glycine + H2O = (6S)-5,6,7,8-tetrahydrofolate + L-serine. It functions in the pathway one-carbon metabolism; tetrahydrofolate interconversion. It participates in amino-acid biosynthesis; glycine biosynthesis; glycine from L-serine: step 1/1. In terms of biological role, catalyzes the reversible interconversion of serine and glycine with tetrahydrofolate (THF) serving as the one-carbon carrier. This reaction serves as the major source of one-carbon groups required for the biosynthesis of purines, thymidylate, methionine, and other important biomolecules. Also exhibits THF-independent aldolase activity toward beta-hydroxyamino acids, producing glycine and aldehydes, via a retro-aldol mechanism. The protein is Serine hydroxymethyltransferase of Ehrlichia canis (strain Jake).